The following is a 668-amino-acid chain: UvrABC system protein B (668 aa).

The Helicase ATP-binding domain occupies 31-416; it reads QGITDGVPAQ…RGHIIEQIIR (386 aa). 44–51 is an ATP binding site; that stretch reads GTTGSGKT. Positions 97 to 120 match the Beta-hairpin motif; it reads YYDYYQPEAYIARSDTYIEKSLLI. In terms of domain architecture, Helicase C-terminal spans 433 to 596; it reads QIDDLLEEIR…ITPQPIIKPI (164 aa). The UVR domain occupies 621 to 656; that stretch reads EASIKTYEEAMYQAAQEFQFDEAVKYRDLMNAAKKQ.

It belongs to the UvrB family. Forms a heterotetramer with UvrA during the search for lesions. Interacts with UvrC in an incision complex.

The protein localises to the cytoplasm. Functionally, the UvrABC repair system catalyzes the recognition and processing of DNA lesions. A damage recognition complex composed of 2 UvrA and 2 UvrB subunits scans DNA for abnormalities. Upon binding of the UvrA(2)B(2) complex to a putative damaged site, the DNA wraps around one UvrB monomer. DNA wrap is dependent on ATP binding by UvrB and probably causes local melting of the DNA helix, facilitating insertion of UvrB beta-hairpin between the DNA strands. Then UvrB probes one DNA strand for the presence of a lesion. If a lesion is found the UvrA subunits dissociate and the UvrB-DNA preincision complex is formed. This complex is subsequently bound by UvrC and the second UvrB is released. If no lesion is found, the DNA wraps around the other UvrB subunit that will check the other stand for damage. This Chlamydia trachomatis serovar A (strain ATCC VR-571B / DSM 19440 / HAR-13) protein is UvrABC system protein B.